Reading from the N-terminus, the 422-residue chain is Interleukin-11 receptor subunit alpha (422 aa).

Positions 1–22 are cleaved as a signal peptide; the sequence is MSSSCSGLSRVLVAVATALVSA. Over 24 to 370 the chain is Extracellular; that stretch reads SPCPQAWGPP…DSVEQVAVLV (347 aa). An Ig-like C2-type domain is found at 27–110; that stretch reads PQAWGPPGVQ…LGGTVTLQLG (84 aa). Disulfide bonds link C48–C94, C120–C130, and C170–C180. 2 Fibronectin type-III domains span residues 112–219 and 220–317; these read PPAR…LRPD and PPQG…TPST. N127 is a glycosylation site (N-linked (GlcNAc...) asparagine). N-linked (GlcNAc...) asparagine glycosylation occurs at N194. The WSXWS motif motif lies at 304 to 308; that stretch reads WSTWS. The interval 335–355 is disordered; the sequence is EVEPQVDSPAPPRPSLQPHPR. Residues 371–391 form a helical membrane-spanning segment; the sequence is SLGILSFLGLVAGALALGLWL. The Cytoplasmic portion of the chain corresponds to 392–422; it reads RLRRGGKDGSPKPGFLASVIPVDRHPGAPNL.

The protein belongs to the type I cytokine receptor family. Type 3 subfamily. As to quaternary structure, on IL11 binding, forms a multimer complex with IL6ST/gp130. In terms of processing, a short soluble form is also released from the membrane by proteolysis. The sIL11RA is formed either by limited proteolysis of membrane-bound receptors, a process referred to as ectodomain shedding, or directly secreted from the cells after alternative mRNA splicing. mIL11RA is cleaved by the proteases ADAM10, ELANE and PRTN3.

The protein resides in the membrane. Its subcellular location is the secreted. Its function is as follows. Receptor for interleukin-11 (IL11). The receptor systems for IL6, LIF, OSM, CNTF, IL11 and CT1 can utilize IL6ST for initiating signal transmission. The IL11/IL11RA/IL6ST complex may be involved in the control of proliferation and/or differentiation of skeletogenic progenitor or other mesenchymal cells. Essential for the normal development of craniofacial bones and teeth. Restricts suture fusion and tooth number. Functionally, soluble form of IL11 receptor (sIL11RA) that acts as an agonist of IL11 activity. The IL11:sIL11RA complex binds to IL6ST/gp130 on cell surfaces and induces signaling also on cells that do not express membrane-bound IL11RA in a process called IL11 trans-signaling. The protein is Interleukin-11 receptor subunit alpha (IL11RA) of Pongo abelii (Sumatran orangutan).